The following is a 91-amino-acid chain: MAELNVEIVSEERSIWSGAASAVSARTVNGEIGILPGHTPMLAVLGDGEVVVRTTDGGTVTAQAHGGFFSVDHDRVVIAATSARLGDAAAA.

It belongs to the ATPase epsilon chain family. F-type ATPases have 2 components, CF(1) - the catalytic core - and CF(0) - the membrane proton channel. CF(1) has five subunits: alpha(3), beta(3), gamma(1), delta(1), epsilon(1). CF(0) has three main subunits: a, b and c.

It localises to the cell membrane. Produces ATP from ADP in the presence of a proton gradient across the membrane. The protein is ATP synthase epsilon chain (atpC) of Micrococcus luteus (strain ATCC 4698 / DSM 20030 / JCM 1464 / CCM 169 / CCUG 5858 / IAM 1056 / NBRC 3333 / NCIMB 9278 / NCTC 2665 / VKM Ac-2230) (Micrococcus lysodeikticus).